The primary structure comprises 465 residues: Phosphatidate cytidylyltransferase (465 aa).

The interval 1–60 (MSDQPPAENADVRQRRAPESPVTERLRAPARDDARPTSDESDMEGILQDEDSDAGSKNKE) is disordered. Positions 10-38 (ADVRQRRAPESPVTERLRAPARDDARPTS) are enriched in basic and acidic residues. The segment covering 39-53 (DESDMEGILQDEDSD) has biased composition (acidic residues). Helical transmembrane passes span 95–117 (WVVR…TRGA), 121–143 (MFLV…LAVY), 158–178 (FLLT…WGIV), 187–207 (FLVA…FVSF), 214–234 (GYYM…LLIV), 239–259 (FIIQ…AMII), 288–308 (GFIG…LALY), and 367–387 (IALS…ASGF).

This sequence belongs to the CDS family.

The protein localises to the membrane. The enzyme catalyses a 1,2-diacyl-sn-glycero-3-phosphate + CTP + H(+) = a CDP-1,2-diacyl-sn-glycerol + diphosphate. The protein operates within phospholipid metabolism; CDP-diacylglycerol biosynthesis; CDP-diacylglycerol from sn-glycerol 3-phosphate: step 3/3. In terms of biological role, provides CDP-diacylglycerol, an important precursor for the synthesis of phosphatidylinositol (PtdIns). The chain is Phosphatidate cytidylyltransferase (cdgs-1) from Caenorhabditis elegans.